A 291-amino-acid chain; its full sequence is MEAPASAQTPHPHEPISFGIDQILNSPDQDSAPAPRGPDGASYLGGPPGGRPGAAYPSLPASFAGLGAPFEDAGSYSVNLSLAPAGVIRVPAHRPLPGAVPPPLPSALPAMPSVPTVSSLGGLNFPWMESSRRFVKDRFTAAAALTPFTVTRRIGHPYQNRTPPKRKKPRTSFSRVQICELEKRFHRQKYLASAERAALAKSLKMTDAQVKTWFQNRRTKWRRQTAEEREAERQQASRLMLQLQHDAFQKSLNDSIQPDPLCLHNSSLFALQNLQPWEEDSSKVPAVTSLV.

The segment at 1 to 51 (MEAPASAQTPHPHEPISFGIDQILNSPDQDSAPAPRGPDGASYLGGPPGGR) is disordered. Residues 166–225 (RKKPRTSFSRVQICELEKRFHRQKYLASAERAALAKSLKMTDAQVKTWFQNRRTKWRRQT) constitute a DNA-binding region (homeobox).

The protein resides in the nucleus. This is T-cell leukemia homeobox protein 3 (Tlx3) from Mus musculus (Mouse).